The primary structure comprises 168 residues: MSRSRINGNFLDKTFSIVANILLRIIPTTSGEKEAFTYYRDGMSAQSEGNYAEALQNYYEAMRLEIDPYDRSYILYNIGLIHTSNGEHMKALEYYFRALERNPFLPQAFNNMAVICHYRGEKAIQQGDSEIAEAWFDQAAEYWKQALALTPGNYIEAHNWLKITGRFD.

TPR repeat units follow at residues 35–68 (AFTY…EIDP), 72–105 (SYIL…NPFL), and 120–153 (GEKA…TPGN).

Belongs to the Ycf3 family.

It localises to the plastid membrane. Essential for the assembly of the photosystem I (PSI) complex. May act as a chaperone-like factor to guide the assembly of the PSI subunits. This Cuscuta exaltata (Tall dodder) protein is Photosystem I assembly protein Ycf3.